An 88-amino-acid polypeptide reads, in one-letter code: Arminin 7965 (88 aa).

The signal sequence occupies residues 1-18 (MKTVFAILFLTFIAFTYA). A propeptide spanning residues 19–57 (KSYEDVKEEIKNEVEREIFEDLEEESDVLDSNVRELNDA) is cleaved from the precursor. A85 carries the alanine amide modification.

This sequence belongs to the arminin family. As to expression, expressed in entodermal epithelium along the body column.

The protein localises to the secreted. It is found in the target cell membrane. Antimicrobial peptide with a broad-spectrum antimicrobial activity. Keeps its antibacterial activity under a wide range of salt concentrations that mimic physiological conditions of human blood, which is surprising, since Hydra is an obligate freshwater animal with nearly no salt tolerance. Does not affect red blood cells. The protein is Arminin 7965 of Hydra vulgaris (Hydra).